The sequence spans 621 residues: SH2B adapter protein 2 (621 aa).

Position 47 is a phosphotyrosine (Tyr47). Ser130 carries the post-translational modification Phosphoserine. The disordered stretch occupies residues 143–166 (RRSSPEPDGGATPKAAEPASEPRD). Residues 186-299 (DIQREGALRF…WVADIQGCVD (114 aa)) enclose the PH domain. Ser303 bears the Phosphoserine mark. An SH2 domain is found at 409–507 (WFHGTLSRVK…SADITLRSYV (99 aa)). Disordered regions lie at residues 507–528 (VRAQ…PVPA) and 549–611 (PASP…LGRA). Residues 552 to 571 (PSNGAGASSSSGSSSSATSL) are compositionally biased toward low complexity. Ser597 is modified (phosphoserine). Phosphotyrosine is present on Tyr618.

It belongs to the SH2B adapter family. Homodimer. Interacts with KIT/c-KIT, SHC1, EPOR, PDGFR, VAV1 and VAV3. Interacts (via N-terminal region) with SHC1. Interacts (via the phosphorylated C-terminus) with GRB2. Interacts (via its SH2 domain) with EPOR, INSR and KIT. Interacts with GRB2 after B-cell antigen receptor stimulation. Interacts (via PH domain) with VAV3. Interacts with NTRK1, NTRK2 and NTRK3 (phosphorylated); after stimulation of the receptor by its extracellular ligand and subsequent autophosphorylation of the receptor. Binds INSR, GRB2, ASB6 and CAP. Insulin stimulation leads to dissociation of CAP. Binds CBS only when SH2B2/APS has become phosphorylated. INSR binding does not depend on the phosphorylation of SH2B2/APS. Tyrosine phosphorylated by JAK2, KIT and other kinases activated by B-cell receptor in response to stimulation with cytokines, IL3, IL5, PDGF, IGF1, IGF2, CSF2/GM-CSF and cross-linking of the B-cell receptor complex. As to expression, strongly expressed in brain; also expressed in spleen, kidney and skeletal muscle, and at low levels in small intestine and bone marrow. Strongly expressed in B-cell lines, but not T-cell lines. Also expressed in myeloid and fibroblast cell lines.

The protein localises to the cytoplasm. The protein resides in the cell membrane. Functionally, adapter protein for several members of the tyrosine kinase receptor family. Involved in multiple signaling pathways. May be involved in coupling from immunoreceptor to Ras signaling. Acts as a negative regulator of cytokine signaling in collaboration with CBL. Binds to EPOR and suppresses EPO-induced STAT5 activation, possibly through a masking effect on STAT5 docking sites in EPOR. Suppresses PDGF-induced mitogenesis. May induce cytoskeletal reorganization via interaction with VAV3. This chain is SH2B adapter protein 2 (Sh2b2), found in Mus musculus (Mouse).